The following is a 432-amino-acid chain: Pachytene checkpoint protein 2 homolog (432 aa).

Met1 carries the N-acetylmethionine modification. ATP is bound at residue 179 to 186; that stretch reads GPPGTGKT.

Belongs to the AAA ATPase family. PCH2 subfamily. As to quaternary structure, specifically interacts with the ligand binding domain of the thyroid receptor (TR). This interaction does not require the presence of thyroid hormone for its interaction. Interacts with proteasome subunit PSMA8; to participate in meiosis progression during spermatogenesis.

Functionally, plays a key role in chromosome recombination and chromosome structure development during meiosis. Required at early steps in meiotic recombination that leads to non-crossovers pathways. Also needed for efficient completion of homologous synapsis by influencing crossover distribution along the chromosomes affecting both crossovers and non-crossovers pathways. Also required for development of higher-order chromosome structures and is needed for synaptonemal-complex formation. In males, required for efficient synapsis of the sex chromosomes and for sex body formation. Promotes early steps of the DNA double-strand breaks (DSBs) repair process upstream of the assembly of RAD51 complexes. Required for depletion of HORMAD1 and HORMAD2 from synapsed chromosomes. This chain is Pachytene checkpoint protein 2 homolog (TRIP13), found in Canis lupus familiaris (Dog).